Here is a 33-residue protein sequence, read N- to C-terminus: Photosystem II reaction center protein Psb30 (33 aa).

The chain crosses the membrane as a helical span at residues 5–25; that stretch reads LALTLVSLVLVVSAGPLVVVL.

This sequence belongs to the Psb30/Ycf12 family. In terms of assembly, PSII is composed of 1 copy each of membrane proteins PsbA, PsbB, PsbC, PsbD, PsbE, PsbF, PsbH, PsbI, PsbJ, PsbK, PsbL, PsbM, PsbT, PsbX, PsbY, PsbZ, Psb30/Ycf12, peripheral proteins of the oxygen-evolving complex and a large number of cofactors. It forms dimeric complexes.

It is found in the plastid. It localises to the chloroplast thylakoid membrane. Its function is as follows. A core subunit of photosystem II (PSII), required for optimal photosynthesis, probably helps stabilize the reaction center. The protein is Photosystem II reaction center protein Psb30 of Chlamydomonas reinhardtii (Chlamydomonas smithii).